We begin with the raw amino-acid sequence, 119 residues long: uncharacterized protein (119 aa).

A run of 2 helical transmembrane segments spans residues Phe19 to Leu39 and Phe68 to Leu88.

It localises to the membrane. This is an uncharacterized protein from Saccharomyces cerevisiae (strain ATCC 204508 / S288c) (Baker's yeast).